Consider the following 110-residue polypeptide: UPF0060 membrane protein Dtpsy_1668 (110 aa).

4 helical membrane-spanning segments follow: residues 7–27 (LALFLLTAVAEIVGCYLPWLW), 33–53 (SAWLLVPAAASLALFAWLLTL), 63–83 (AAYGGVYVAVALVWLWTVDGV), and 86–106 (GPWDWLGVSVTLCGMAIIAFA).

The protein belongs to the UPF0060 family.

The protein resides in the cell inner membrane. This Acidovorax ebreus (strain TPSY) (Diaphorobacter sp. (strain TPSY)) protein is UPF0060 membrane protein Dtpsy_1668.